Here is a 405-residue protein sequence, read N- to C-terminus: Alpha-1-antiproteinase S (405 aa).

The N-terminal stretch at 1–24 is a signal peptide; that stretch reads MPSAIPRGLLLLAGLCCLVFGIMA. N-linked (GlcNAc...) asparagine glycans are attached at residues Asn57, Asn94, Asn157, and Asn258. The segment at 360–379 is RCL; sequence GATMMEFMPMSLPEDLSFNK.

This sequence belongs to the serpin family.

It is found in the secreted. Its function is as follows. Inhibits elastase, chymotrypsin, cathepsin G, plasmin, and trypsin. The chain is Alpha-1-antiproteinase S from Cavia porcellus (Guinea pig).